Reading from the N-terminus, the 141-residue chain is Nucleoside diphosphate kinase (141 aa).

Residues K11, F59, R87, T93, R104, and N114 each contribute to the ATP site. H117 functions as the Pros-phosphohistidine intermediate in the catalytic mechanism.

This sequence belongs to the NDK family. As to quaternary structure, homotetramer. Requires Mg(2+) as cofactor.

Its subcellular location is the cytoplasm. The catalysed reaction is a 2'-deoxyribonucleoside 5'-diphosphate + ATP = a 2'-deoxyribonucleoside 5'-triphosphate + ADP. It catalyses the reaction a ribonucleoside 5'-diphosphate + ATP = a ribonucleoside 5'-triphosphate + ADP. Functionally, major role in the synthesis of nucleoside triphosphates other than ATP. The ATP gamma phosphate is transferred to the NDP beta phosphate via a ping-pong mechanism, using a phosphorylated active-site intermediate. This Cupriavidus necator (strain ATCC 17699 / DSM 428 / KCTC 22496 / NCIMB 10442 / H16 / Stanier 337) (Ralstonia eutropha) protein is Nucleoside diphosphate kinase.